A 260-amino-acid chain; its full sequence is MVKEKDKPKNEIIIETENLNLFYTDFKALNEINIKILKNSITALIGPSGCGKSTFLRTLNRMNDLVEGIKIEGNVIYEGKNIYSNNFDILELRRKIGMVFQTPNPFLMSIYDNISYGPKIHGTKDKKKLDEIVEQSLKKSALWDEVKDKLNTNALSLSGGQQQRLCIARTLAIEPNVILMDEPTSALDPISTGKIEELIINLKESYTIIIVTHNMQQAGRISDRTAFFLNGCIEEESPTDELFFNPKNTKTEEYISGKFG.

The 242-residue stretch at 14-255 folds into the ABC transporter domain; sequence IETENLNLFY…PKNTKTEEYI (242 aa). An ATP-binding site is contributed by 46 to 53; it reads GPSGCGKS.

This sequence belongs to the ABC transporter superfamily. Phosphate importer (TC 3.A.1.7) family. The complex is composed of two ATP-binding proteins (PstB), two transmembrane proteins (PstC and PstA) and a solute-binding protein (PstS).

It is found in the cell inner membrane. It carries out the reaction phosphate(out) + ATP + H2O = ADP + 2 phosphate(in) + H(+). In terms of biological role, part of the ABC transporter complex PstSACB involved in phosphate import. Responsible for energy coupling to the transport system. The chain is Phosphate import ATP-binding protein PstB from Borreliella afzelii (strain PKo) (Borrelia afzelii).